A 393-amino-acid polypeptide reads, in one-letter code: NAD(P)H-quinone oxidoreductase subunit H, chloroplastic (393 aa).

It belongs to the complex I 49 kDa subunit family. NDH is composed of at least 16 different subunits, 5 of which are encoded in the nucleus.

The protein localises to the plastid. It localises to the chloroplast thylakoid membrane. It catalyses the reaction a plastoquinone + NADH + (n+1) H(+)(in) = a plastoquinol + NAD(+) + n H(+)(out). The enzyme catalyses a plastoquinone + NADPH + (n+1) H(+)(in) = a plastoquinol + NADP(+) + n H(+)(out). NDH shuttles electrons from NAD(P)H:plastoquinone, via FMN and iron-sulfur (Fe-S) centers, to quinones in the photosynthetic chain and possibly in a chloroplast respiratory chain. The immediate electron acceptor for the enzyme in this species is believed to be plastoquinone. Couples the redox reaction to proton translocation, and thus conserves the redox energy in a proton gradient. This is NAD(P)H-quinone oxidoreductase subunit H, chloroplastic from Drimys granadensis.